The primary structure comprises 273 residues: Cysteine protease S273R (273 aa).

Catalysis depends on residues His-168 and Asn-187. Gln-226 lines the substrate pocket. Cys-232 functions as the Nucleophile in the catalytic mechanism.

The protein belongs to the peptidase C63 family.

Its subcellular location is the host cytoplasm. The protein resides in the virion. Its function is as follows. Cysteine protease that plays several role during infection including processing of the structural polyprotein or inhibition of the host immune response. Catalyzes the maturation of the pp220 and pp62 polyprotein precursors into core-shell proteins. Plays a role in the disruption of host pyroptosis via specific cleavage of gasdermin D/GSDMD. In addition, strongly decreases the host cGAS-STING signaling by targeting IKBKE via its enzymatic activity. Also impairs host FOXJ1-mediated antiviral effect via degradation of FOXJ1. Cleaves host G3BP1 inducing loss of stress granules formation. Interacts with and induces the degradation of host STAT2 via polyubiquitination of the latter. This is Cysteine protease S273R from Ornithodoros (relapsing fever ticks).